The primary structure comprises 227 residues: PKHD-type hydroxylase Dtpsy_0528 (227 aa).

One can recognise a Fe2OG dioxygenase domain in the interval 78 to 178 (TIYPPKFNRY…RVASFFWIES (101 aa)). His-96, Asp-98, and His-159 together coordinate Fe cation. Arg-169 is a binding site for 2-oxoglutarate.

It depends on Fe(2+) as a cofactor. L-ascorbate serves as cofactor.

The protein is PKHD-type hydroxylase Dtpsy_0528 of Acidovorax ebreus (strain TPSY) (Diaphorobacter sp. (strain TPSY)).